Consider the following 385-residue polypeptide: Acetate kinase (385 aa).

Asn9 is a Mg(2+) binding site. Position 16 (Lys16) interacts with ATP. Arg87 provides a ligand contact to substrate. Asp144 functions as the Proton donor/acceptor in the catalytic mechanism. ATP contacts are provided by residues 202 to 206 (HLGSG) and 277 to 279 (DMR). Residue Glu373 coordinates Mg(2+).

This sequence belongs to the acetokinase family. In terms of assembly, homodimer. Requires Mg(2+) as cofactor. Mn(2+) serves as cofactor.

It localises to the cytoplasm. The enzyme catalyses acetate + ATP = acetyl phosphate + ADP. Its pathway is metabolic intermediate biosynthesis; acetyl-CoA biosynthesis; acetyl-CoA from acetate: step 1/2. Functionally, catalyzes the formation of acetyl phosphate from acetate and ATP. Can also catalyze the reverse reaction. This chain is Acetate kinase, found in Rickettsia typhi (strain ATCC VR-144 / Wilmington).